Here is a 310-residue protein sequence, read N- to C-terminus: 4-hydroxyproline 2-epimerase (310 aa).

Cys85 serves as the catalytic Proton acceptor. Residues 86–87, His205, and Asp231 each bind substrate; that span reads GH. The Proton donor role is filled by Cys235. A substrate-binding site is contributed by 236–237; that stretch reads GT.

This sequence belongs to the proline racemase family.

It carries out the reaction trans-4-hydroxy-L-proline = cis-4-hydroxy-D-proline. In terms of biological role, catalyzes the epimerization of trans-4-hydroxy-L-proline (t4LHyp) to cis-4-hydroxy-D-proline (c4DHyp). May be involved in a degradation pathway of t4LHyp, which would allow L.aggregata to grow on t4LHyp as a sole carbon source. Displays no proline racemase activity. The chain is 4-hydroxyproline 2-epimerase from Roseibium aggregatum (strain ATCC 25650 / DSM 13394 / JCM 20685 / NBRC 16684 / NCIMB 2208 / IAM 12614 / B1) (Stappia aggregata).